A 215-amino-acid chain; its full sequence is Fanconi anemia core complex-associated protein 24 (215 aa).

In terms of assembly, belongs to the multisubunit FA complex composed of FANCA, FANCB, FANCC, FANCE, FANCF, FANCG, FANCL/PHF9, FANCM and FAAP24. Interacts with FANCM.

The protein localises to the nucleus. Functionally, plays a role in DNA repair through recruitment of the FA core complex to damaged DNA. Regulates FANCD2 monoubiquitination upon DNA damage. Induces chromosomal instability as well as hypersensitivity to DNA cross-linking agents, when repressed. Targets FANCM/FAAP24 complex to the DNA, preferentially to single strand DNA. The sequence is that of Fanconi anemia core complex-associated protein 24 from Bos taurus (Bovine).